A 1163-amino-acid chain; its full sequence is DNA-directed RNA polymerase subunit beta 2 (1163 aa).

It belongs to the RNA polymerase beta chain family. The RNAP catalytic core consists of 2 alpha, 1 beta, 1 beta' and 1 omega subunit. When a sigma factor is associated with the core the holoenzyme is formed, which can initiate transcription.

It catalyses the reaction RNA(n) + a ribonucleoside 5'-triphosphate = RNA(n+1) + diphosphate. Functionally, DNA-dependent RNA polymerase catalyzes the transcription of DNA into RNA using the four ribonucleoside triphosphates as substrates. The protein is DNA-directed RNA polymerase subunit beta 2 of Nocardia farcinica (strain IFM 10152).